Here is a 644-residue protein sequence, read N- to C-terminus: Exoribonuclease 2 (644 aa).

The 328-residue stretch at arginine 189–lysine 516 folds into the RNB domain. The S1 motif domain occupies asparagine 561–alanine 643.

The protein belongs to the RNR ribonuclease family. RNase II subfamily.

The protein localises to the cytoplasm. The enzyme catalyses Exonucleolytic cleavage in the 3'- to 5'-direction to yield nucleoside 5'-phosphates.. Its function is as follows. Involved in mRNA degradation. Hydrolyzes single-stranded polyribonucleotides processively in the 3' to 5' direction. The chain is Exoribonuclease 2 from Salmonella enteritidis PT4 (strain P125109).